The following is a 339-amino-acid chain: Ribosomal RNA small subunit methyltransferase C (339 aa).

Belongs to the methyltransferase superfamily. RsmC family. Monomer.

It localises to the cytoplasm. It carries out the reaction guanosine(1207) in 16S rRNA + S-adenosyl-L-methionine = N(2)-methylguanosine(1207) in 16S rRNA + S-adenosyl-L-homocysteine + H(+). Specifically methylates the guanine in position 1207 of 16S rRNA in the 30S particle. This Aliivibrio fischeri (strain MJ11) (Vibrio fischeri) protein is Ribosomal RNA small subunit methyltransferase C.